The primary structure comprises 46 residues: Spectrin alpha chain, non-erythrocytic 1 (46 aa).

Spectrin repeat units follow at residues 1-5 (AQLAD), 7-14 (FHLQQFFR), 15-20 (SQLLGS), 21-26 (AHEVQR), 27-35 (LAQFVEHWK), and 39-46 (DLFLTFAK).

This sequence belongs to the spectrin family. In terms of assembly, associates with the gamma-tubulin complex in brain, but not in kidney, liver, sperm, or uterus. Like erythrocyte spectrin, the spectrin-like proteins are capable of forming dimers which can further associate to tetramers. Interacts with isoform 1 of ACP1. Interacts with CALM and EMD. Interacts (via C-terminal spectrin repeats) with TRPC4. Identified in a complex with ACTN4, CASK, IQGAP1, MAGI2, NPHS1 and SPTBN1. Interacts with CLN3; this interaction regulates the fodrin localization at the plasma membrane.

It localises to the cytoplasm. It is found in the cytoskeleton. Its subcellular location is the cell cortex. Functionally, fodrin, which seems to be involved in secretion, interacts with calmodulin in a calcium-dependent manner and is thus candidate for the calcium-dependent movement of the cytoskeleton at the membrane. This is Spectrin alpha chain, non-erythrocytic 1 (SPTAN1) from Capra hircus (Goat).